The following is a 499-amino-acid chain: Probable cytosol aminopeptidase (499 aa).

Residues K263 and D268 each contribute to the Mn(2+) site. K275 is a catalytic residue. Mn(2+) is bound by residues D286, D345, and E347. Residue R349 is part of the active site.

Belongs to the peptidase M17 family. The cofactor is Mn(2+).

The protein resides in the cytoplasm. The enzyme catalyses Release of an N-terminal amino acid, Xaa-|-Yaa-, in which Xaa is preferably Leu, but may be other amino acids including Pro although not Arg or Lys, and Yaa may be Pro. Amino acid amides and methyl esters are also readily hydrolyzed, but rates on arylamides are exceedingly low.. It carries out the reaction Release of an N-terminal amino acid, preferentially leucine, but not glutamic or aspartic acids.. In terms of biological role, presumably involved in the processing and regular turnover of intracellular proteins. Catalyzes the removal of unsubstituted N-terminal amino acids from various peptides. This is Probable cytosol aminopeptidase from Chlamydia trachomatis serovar L2 (strain ATCC VR-902B / DSM 19102 / 434/Bu).